The sequence spans 688 residues: Polyphosphate kinase (688 aa).

Asn-45 is a binding site for ATP. Arg-375 and Arg-405 together coordinate Mg(2+). The PLD phosphodiesterase domain occupies Pro-430 to Thr-464. His-435 functions as the Phosphohistidine intermediate in the catalytic mechanism. Tyr-468, Arg-564, and His-592 together coordinate ATP.

It belongs to the polyphosphate kinase 1 (PPK1) family. Mg(2+) serves as cofactor. In terms of processing, an intermediate of this reaction is the autophosphorylated ppk in which a phosphate is covalently linked to a histidine residue through a N-P bond.

It catalyses the reaction [phosphate](n) + ATP = [phosphate](n+1) + ADP. Catalyzes the reversible transfer of the terminal phosphate of ATP to form a long-chain polyphosphate (polyP). This is Polyphosphate kinase from Escherichia coli O6:H1 (strain CFT073 / ATCC 700928 / UPEC).